A 384-amino-acid polypeptide reads, in one-letter code: Cobalt-precorrin-5B C(1)-methyltransferase (384 aa).

The protein belongs to the CbiD family.

It carries out the reaction Co-precorrin-5B + S-adenosyl-L-methionine = Co-precorrin-6A + S-adenosyl-L-homocysteine. Its pathway is cofactor biosynthesis; adenosylcobalamin biosynthesis; cob(II)yrinate a,c-diamide from sirohydrochlorin (anaerobic route): step 6/10. In terms of biological role, catalyzes the methylation of C-1 in cobalt-precorrin-5B to form cobalt-precorrin-6A. The polypeptide is Cobalt-precorrin-5B C(1)-methyltransferase (Marinomonas sp. (strain MWYL1)).